A 519-amino-acid polypeptide reads, in one-letter code: Glutamate--cysteine ligase (519 aa).

This sequence belongs to the glutamate--cysteine ligase type 1 family. Type 1 subfamily.

The catalysed reaction is L-cysteine + L-glutamate + ATP = gamma-L-glutamyl-L-cysteine + ADP + phosphate + H(+). Its pathway is sulfur metabolism; glutathione biosynthesis; glutathione from L-cysteine and L-glutamate: step 1/2. In Yersinia pseudotuberculosis serotype I (strain IP32953), this protein is Glutamate--cysteine ligase.